The primary structure comprises 364 residues: MYFFTISRLTSFISYGILGALGILTFLYLYDAYLAKSFQRLVIERRSKRESLSKNLSPNDNSHNSKIDISSDYQLLNEYKVAYYLRPGIIPLNHNLAKQEVFVFLHGLGGQMSQFQKVMSYFPPTACLFSFDYWGCGLSRQAFPNQRIGSVDQLTTKGLSKLTYKVLEKLFPENTQFILIGHSMGATIASRVSKMLQTRCTALLLLNPKIRFTSKEISMIVRLRKTPNAFISLYRLLDRFHGLRSSSVTRSLSKNIKGDGDAVRAQLWLWNRQSNTKIWKTMLMGLEELLEPGFHFPKCPILILFGEFDPVSSLKDKVFFQDYPGNYTFKEIDTGHCSMLEQPSEVYNCIDSFLDKFSTTDHNI.

Topologically, residues 1 to 8 (MYFFTISR) are cytoplasmic. The helical; Signal-anchor for type II membrane protein transmembrane segment at 9-29 (LTSFISYGILGALGILTFLYL) threads the bilayer. Over 30–364 (YDAYLAKSFQ…DKFSTTDHNI (335 aa)) the chain is Lumenal. S183 serves as the catalytic Charge relay system. N-linked (GlcNAc...) asparagine glycosylation occurs at N326. H336 acts as the Charge relay system in catalysis.

This sequence belongs to the AB hydrolase superfamily.

Its subcellular location is the endoplasmic reticulum membrane. In Schizosaccharomyces pombe (strain 972 / ATCC 24843) (Fission yeast), this protein is Abhydrolase domain-containing protein C57A10.08c.